Consider the following 621-residue polypeptide: Protein Tra (621 aa).

The chain crosses the membrane as a helical span at residues 126-146 (GAWPVAGSLALIAANVAALVI). In terms of domain architecture, FtsK spans 275 to 465 (GEPVQVPLGR…LALSTSGESR (191 aa)). Residue 290–297 (GTSGSGKS) coordinates ATP. A helical transmembrane segment spans residues 564-584 (VAAAIGTGATTVADVATVTGI).

Its subcellular location is the cell membrane. Its function is as follows. Major protein required for plasmid transfer. This is Protein Tra (tra) from Streptomyces lividans.